We begin with the raw amino-acid sequence, 549 residues long: Chaperonin GroEL (549 aa).

ATP is bound by residues 30–33 (TLGP), K51, 87–91 (DGTTT), G415, and D495.

This sequence belongs to the chaperonin (HSP60) family. Forms a cylinder of 14 subunits composed of two heptameric rings stacked back-to-back. Interacts with the co-chaperonin GroES.

The protein resides in the cytoplasm. The catalysed reaction is ATP + H2O + a folded polypeptide = ADP + phosphate + an unfolded polypeptide.. Together with its co-chaperonin GroES, plays an essential role in assisting protein folding. The GroEL-GroES system forms a nano-cage that allows encapsulation of the non-native substrate proteins and provides a physical environment optimized to promote and accelerate protein folding. The chain is Chaperonin GroEL from Hahella chejuensis (strain KCTC 2396).